The primary structure comprises 334 residues: Formylmethanofuran--tetrahydromethanopterin formyltransferase (334 aa).

Belongs to the FTR family. Homotetramer.

The protein localises to the cytoplasm. The enzyme catalyses N-formylmethanofuran + 5,6,7,8-tetrahydromethanopterin + H(+) = N(5)-formyl-5,6,7,8-tetrahydromethanopterin + methanofuran. The protein operates within one-carbon metabolism; formaldehyde degradation; formate from formaldehyde (H(4)MPT route): step 4/5. Catalyzes the transfer of a formyl group from 5-formyl tetrahydromethanopterin (5-formyl-H(4)MPT) to methanofuran (MFR) to produce formylmethanofuran (formyl-MFR) and tetrahydromethanopterin (H(4)MPT). This is Formylmethanofuran--tetrahydromethanopterin formyltransferase from Rhodopirellula baltica (strain DSM 10527 / NCIMB 13988 / SH1).